A 328-amino-acid polypeptide reads, in one-letter code: Malate dehydrogenase (328 aa).

12–18 (GAAGQIG) contacts NAD(+). 2 residues coordinate substrate: Arg-95 and Arg-101. NAD(+) is bound by residues Asn-108, Gln-115, and 132–134 (VGN). Residues Asn-134 and Arg-165 each contribute to the substrate site. Residue His-190 is the Proton acceptor of the active site.

The protein belongs to the LDH/MDH superfamily. MDH type 2 family.

The catalysed reaction is (S)-malate + NAD(+) = oxaloacetate + NADH + H(+). Its function is as follows. Catalyzes the reversible oxidation of malate to oxaloacetate. This Variovorax paradoxus (strain S110) protein is Malate dehydrogenase.